Reading from the N-terminus, the 704-residue chain is Glycine--tRNA ligase beta subunit (704 aa).

The protein belongs to the class-II aminoacyl-tRNA synthetase family. In terms of assembly, tetramer of two alpha and two beta subunits.

It is found in the cytoplasm. The enzyme catalyses tRNA(Gly) + glycine + ATP = glycyl-tRNA(Gly) + AMP + diphosphate. The protein is Glycine--tRNA ligase beta subunit of Rhizobium etli (strain CIAT 652).